A 561-amino-acid polypeptide reads, in one-letter code: DNA ligase B (561 aa).

Lys-128 functions as the N6-AMP-lysine intermediate in the catalytic mechanism.

The protein belongs to the NAD-dependent DNA ligase family. LigB subfamily.

The catalysed reaction is NAD(+) + (deoxyribonucleotide)n-3'-hydroxyl + 5'-phospho-(deoxyribonucleotide)m = (deoxyribonucleotide)n+m + AMP + beta-nicotinamide D-nucleotide.. In terms of biological role, catalyzes the formation of phosphodiester linkages between 5'-phosphoryl and 3'-hydroxyl groups in double-stranded DNA using NAD as a coenzyme and as the energy source for the reaction. This chain is DNA ligase B, found in Pseudomonas syringae pv. tomato (strain ATCC BAA-871 / DC3000).